The chain runs to 319 residues: Serpentine receptor class X-43 (319 aa).

Helical transmembrane passes span 28-48, 67-87, 95-115, 138-158, 164-184, 194-214, and 267-287; these read VVSM…IGCF, AQLM…LLNI, YLFG…FLLM, IRTF…YLVV, FVFY…CGTL, TVLS…LMAF, and FFFT…VVVF.

The protein belongs to the G-protein coupled receptor 1 family. Expressed in ASI sensory neurons.

It localises to the cell membrane. The protein localises to the perikaryon. The protein resides in the cell projection. It is found in the cilium. Functionally, receptor for the ascaroside pheromone icas#9 which suppresses exploratory forgaging behavior. In response to ascaroside icas#9, may furthermore play a role in the expression of genes in the TGF-beta signaling pathway, such as daf-7, and in insulin signaling pathway, such as daf-28, which may in turn contribute to exploratory behavior. The sequence is that of Serpentine receptor class X-43 from Caenorhabditis elegans.